The following is a 393-amino-acid chain: 8-amino-7-oxononanoate synthase (393 aa).

107-108 (GF) lines the pyridoxal 5'-phosphate pocket. A substrate-binding site is contributed by histidine 132. Residues serine 180, 205-208 (DDAH), and 236-239 (TLSK) contribute to the pyridoxal 5'-phosphate site. Lysine 239 is modified (N6-(pyridoxal phosphate)lysine). A substrate-binding site is contributed by threonine 353.

This sequence belongs to the class-II pyridoxal-phosphate-dependent aminotransferase family. BioF subfamily. In terms of assembly, homodimer. Pyridoxal 5'-phosphate is required as a cofactor.

The enzyme catalyses 6-carboxyhexanoyl-[ACP] + L-alanine + H(+) = (8S)-8-amino-7-oxononanoate + holo-[ACP] + CO2. Its pathway is cofactor biosynthesis; biotin biosynthesis. Its function is as follows. Catalyzes the decarboxylative condensation of pimeloyl-[acyl-carrier protein] and L-alanine to produce 8-amino-7-oxononanoate (AON), [acyl-carrier protein], and carbon dioxide. This chain is 8-amino-7-oxononanoate synthase, found in Coprothermobacter proteolyticus (strain ATCC 35245 / DSM 5265 / OCM 4 / BT).